The following is a 156-amino-acid chain: MIP18 family protein galla-2 (156 aa).

This sequence belongs to the MIP18 family. Component of the CGX complex composed of crb, galla (galla-1 or galla-2) and Xpd. Interacts with crb (via intracellular domain). Also able to interact with Xpd in the absence of crb. Interacts with Mms19.

Its function is as follows. Component of the crb-galla-Xpd (CGX) complex which is essential for proper mitotic chromosome segregation in early embryos. The CGX complex is also required for cell proliferation in developing wing disks. In the CGX complex, acts with crb to recruit Xpd thus forming the functional complex. This chain is MIP18 family protein galla-2, found in Drosophila melanogaster (Fruit fly).